A 206-amino-acid polypeptide reads, in one-letter code: Pyrrolidone-carboxylate peptidase (206 aa).

Catalysis depends on residues E76, C139, and H163.

The protein belongs to the peptidase C15 family. In terms of assembly, homotetramer.

It localises to the cytoplasm. It carries out the reaction Release of an N-terminal pyroglutamyl group from a polypeptide, the second amino acid generally not being Pro.. Its function is as follows. Removes 5-oxoproline from various penultimate amino acid residues except L-proline. In Pyrococcus horikoshii (strain ATCC 700860 / DSM 12428 / JCM 9974 / NBRC 100139 / OT-3), this protein is Pyrrolidone-carboxylate peptidase (pcp).